A 142-amino-acid polypeptide reads, in one-letter code: Hemoglobin subunit alpha (142 aa).

A Globin domain is found at 2–142 (VLSPADKSNV…VSTVLTSKYR (141 aa)). Residue Ser-4 is modified to Phosphoserine. 2 positions are modified to N6-succinyllysine: Lys-8 and Lys-12. Lys-17 carries the post-translational modification N6-acetyllysine; alternate. Lys-17 carries the post-translational modification N6-succinyllysine; alternate. Tyr-25 carries the post-translational modification Phosphotyrosine. Phosphoserine is present on Ser-36. Position 41 is an N6-succinyllysine (Lys-41). A Phosphoserine modification is found at Ser-50. His-59 lines the O2 pocket. A heme b-binding site is contributed by His-88. At Ser-103 the chain carries Phosphoserine. A Phosphothreonine modification is found at Thr-109. Ser-125 carries the phosphoserine modification. Phosphothreonine occurs at positions 135 and 138. Ser-139 is subject to Phosphoserine.

This sequence belongs to the globin family. As to quaternary structure, heterotetramer of two alpha chains and two beta chains. As to expression, red blood cells.

Functionally, involved in oxygen transport from the lung to the various peripheral tissues. Its function is as follows. Hemopressin acts as an antagonist peptide of the cannabinoid receptor CNR1. Hemopressin-binding efficiently blocks cannabinoid receptor CNR1 and subsequent signaling. The chain is Hemoglobin subunit alpha (HBA) from Ursus maritimus (Polar bear).